Here is a 217-residue protein sequence, read N- to C-terminus: Ras-related protein Rab-39A (217 aa).

GTP contacts are provided by Ser-17, Gly-20, Lys-21, Ser-22, Cys-23, and Thr-44. Residue Ser-22 coordinates Mg(2+). Residues 39 to 47 form a switch-I region; it reads PACDPTVGV. Mg(2+) contacts are provided by Thr-44 and Asp-68. 6 residues coordinate GTP: Gly-71, His-127, Lys-128, Asp-130, Ala-158, and Lys-159. The segment at 71–87 is switch-II; that stretch reads GQERFRSITRSYYRNSV. S-geranylgeranyl cysteine attachment occurs at residues Cys-215 and Cys-217. Cys-217 carries the cysteine methyl ester modification.

The protein belongs to the small GTPase superfamily. Rab family. As to quaternary structure, interacts (GDP-bound) with C9orf72; C9orf72 acts as a GEF for RAB39A. Interacts (GTP-bound) with HOPS complex components VPS39 and VPS41, and STX17; interaction between HOPS components and RAB39A contributes to obtaining a functional HOPS complex that promotes membrane fusion driven by STX17-SNAP29-VAMP8. Interacts with BECN1. Probably associates with the PI3K (PI3KC3/PI3K-III/class III phosphatidylinositol 3-kinase) complex. Interacts with UACA. Interacts with isoform a of RASSF1. Does not interact with isoform c of RASSF1. Mg(2+) serves as cofactor. In terms of processing, prenylated. Prenylation is required for association with cellular membranes.

Its subcellular location is the cell membrane. The protein resides in the cytoplasmic vesicle. The protein localises to the phagosome membrane. It is found in the lysosome membrane. It localises to the autolysosome membrane. It catalyses the reaction GTP + H2O = GDP + phosphate + H(+). Regulated by guanine nucleotide exchange factors (GEFs) including c9Orf72, which promote the exchange of bound GDP for free GTP. Regulated by GTPase activating proteins (GAPs) which increase the GTP hydrolysis activity. Inhibited by GDP dissociation inhibitors (GDIs). The small GTPases Rab are key regulators of intracellular membrane trafficking, from the formation of transport vesicles to their fusion with membranes. Rabs cycle between an inactive GDP-bound form and an active GTP-bound form that is able to recruit to membranes different sets of downstream effectors directly responsible for vesicle formation, movement, tethering and fusion. RAB39A regulates autophagosome-lysosome fusion via recruitment of the HOPS endosomal tethering complex onto lysosomes; this process involves lysosomal RAB39A and autophagosomal RAB2A recruitment of HOPS subcomplexes VPS41-VPS16-VPS18-VPS33A and VPS39-VPS11, respectively, which assemble into a functional complex to mediate membrane tethering and SNAREs-driven membrane fusion. Also negatively regulates lipopolysaccharide (LPS)-induced autophagosome formation in macrophages, possibly by implicating PI3K. Promotes the delivery of MHC-I molecules from the ER to phagosomes and the generation of peptide-loaded MHC-I complexes in phagosomes, thus enhancing antigen cross-presentation by dendritic cells. Plays a role in the maturation and acidification of phagosomes that engulf pathogens, such as S.aureus and M.tuberculosis. Plays a role in the fusion of phagosomes with lysosomes. May be involved in multiple neurite formation. This is Ras-related protein Rab-39A from Homo sapiens (Human).